A 135-amino-acid chain; its full sequence is uncharacterized protein (135 aa).

A helical membrane pass occupies residues 35–55 (VVLVLIGATIILVVISVLVVS).

It is found in the membrane. This is an uncharacterized protein from Saccharomyces cerevisiae (strain ATCC 204508 / S288c) (Baker's yeast).